The primary structure comprises 203 residues: MIPLIETSALLLGLTALLAYLLGSVPFGIMMARLFGLGDLRSVGSGNIGATNVLRTGNKLAAFLTLVLDAGKGAIAVFLARALLGEDAAQLAGFAAFLGHCFPVFLGFKGGKGVATFLGTLLALAWPIGLAACAIWAITAAVFRMSSLAALVAAALSPLAAFTLGLPSAVVFCAALATLIFLRHRGNISRIAKGQEPKIGKTS.

Transmembrane regions (helical) follow at residues 10 to 30 (LLLGLTALLAYLLGSVPFGIM), 60 to 80 (LAAFLTLVLDAGKGAIAVFLA), 88 to 108 (AAQLAGFAAFLGHCFPVFLGF), 118 to 138 (LGTLLALAWPIGLAACAIWAI), and 162 to 182 (FTLGLPSAVVFCAALATLIFL).

It belongs to the PlsY family. In terms of assembly, probably interacts with PlsX.

It localises to the cell inner membrane. It catalyses the reaction an acyl phosphate + sn-glycerol 3-phosphate = a 1-acyl-sn-glycero-3-phosphate + phosphate. Its pathway is lipid metabolism; phospholipid metabolism. In terms of biological role, catalyzes the transfer of an acyl group from acyl-phosphate (acyl-PO(4)) to glycerol-3-phosphate (G3P) to form lysophosphatidic acid (LPA). This enzyme utilizes acyl-phosphate as fatty acyl donor, but not acyl-CoA or acyl-ACP. This chain is Glycerol-3-phosphate acyltransferase, found in Jannaschia sp. (strain CCS1).